Reading from the N-terminus, the 406-residue chain is Bifunctional enzyme IspD/IspF (406 aa).

Positions 1 to 247 (MSLIRVNGEA…TPFFNPAKDT (247 aa)) are 2-C-methyl-D-erythritol 4-phosphate cytidylyltransferase. The segment at 248–406 (FIGMGFDTHA…HASMRYKQKL (159 aa)) is 2-C-methyl-D-erythritol 2,4-cyclodiphosphate synthase. A divalent metal cation-binding residues include Asp-254 and His-256. 4-CDP-2-C-methyl-D-erythritol 2-phosphate contacts are provided by residues 254-256 (DTH) and 280-281 (HS). A divalent metal cation is bound at residue His-288. Residues 302–304 (DIG), 307–311 (FPDND), 378–381 (TTME), and Phe-385 contribute to the 4-CDP-2-C-methyl-D-erythritol 2-phosphate site.

In the N-terminal section; belongs to the IspD/TarI cytidylyltransferase family. IspD subfamily. The protein in the C-terminal section; belongs to the IspF family. The cofactor is a divalent metal cation.

The catalysed reaction is 2-C-methyl-D-erythritol 4-phosphate + CTP + H(+) = 4-CDP-2-C-methyl-D-erythritol + diphosphate. It catalyses the reaction 4-CDP-2-C-methyl-D-erythritol 2-phosphate = 2-C-methyl-D-erythritol 2,4-cyclic diphosphate + CMP. It functions in the pathway isoprenoid biosynthesis; isopentenyl diphosphate biosynthesis via DXP pathway; isopentenyl diphosphate from 1-deoxy-D-xylulose 5-phosphate: step 2/6. The protein operates within isoprenoid biosynthesis; isopentenyl diphosphate biosynthesis via DXP pathway; isopentenyl diphosphate from 1-deoxy-D-xylulose 5-phosphate: step 4/6. In terms of biological role, bifunctional enzyme that catalyzes the formation of 4-diphosphocytidyl-2-C-methyl-D-erythritol from CTP and 2-C-methyl-D-erythritol 4-phosphate (MEP) (IspD), and catalyzes the conversion of 4-diphosphocytidyl-2-C-methyl-D-erythritol 2-phosphate (CDP-ME2P) to 2-C-methyl-D-erythritol 2,4-cyclodiphosphate (ME-CPP) with a corresponding release of cytidine 5-monophosphate (CMP) (IspF). The polypeptide is Bifunctional enzyme IspD/IspF (Helicobacter acinonychis (strain Sheeba)).